Consider the following 401-residue polypeptide: Argininosuccinate synthase (401 aa).

ATP is bound by residues 10–18 (AYSGGVDTS) and Ala38. Tyr89 provides a ligand contact to L-citrulline. Gly119 provides a ligand contact to ATP. 3 residues coordinate L-aspartate: Thr121, Asn125, and Asp126. Asn125 is an L-citrulline binding site. Arg129, Ser177, Ser186, Glu262, and Tyr274 together coordinate L-citrulline.

Belongs to the argininosuccinate synthase family. Type 1 subfamily. In terms of assembly, homotetramer.

It localises to the cytoplasm. The enzyme catalyses L-citrulline + L-aspartate + ATP = 2-(N(omega)-L-arginino)succinate + AMP + diphosphate + H(+). It functions in the pathway amino-acid biosynthesis; L-arginine biosynthesis; L-arginine from L-ornithine and carbamoyl phosphate: step 2/3. The chain is Argininosuccinate synthase from Microcystis aeruginosa (strain NIES-843 / IAM M-2473).